Consider the following 436-residue polypeptide: F-box protein SKIP16 (436 aa).

Residues 75–111 form the F-box; degenerate domain; sequence RESFRMYPWNLVKRVRLCWDNLKQWLTLNFPEAKATL. The ApaG domain maps to 295-436; it reads VSVTNGVQVR…FPLELPDYIF (142 aa).

In terms of assembly, part of a SCF (ASK-cullin-F-box) protein ligase complex. Interacts with SKP1A/ASK1, SKP1B/ASK2, ASK4, ASK11 and ASK13.

Its pathway is protein modification; protein ubiquitination. Component of SCF(ASK-cullin-F-box) E3 ubiquitin ligase complexes, which may mediate the ubiquitination and subsequent proteasomal degradation of target proteins. In Arabidopsis thaliana (Mouse-ear cress), this protein is F-box protein SKIP16 (SKIP16).